The chain runs to 352 residues: MAIDENKQKALAAALGQIEKQFGKGSIMRLGEDRTMDVETISTGSLSLDIALGAGGLPMGRIVEIYGPESSGKTTLTLQVIAAAQREGKTCAFIDAEHALDPVYARKLGVDIDNLLCSQPDTGEQALEICDALARSGAVDVIVVDSVAALTPKAEIEGEIGDSHMGLAARMMSQAMRKLAGNLKQSNTLLIFINQIRMKIGVMFGNPETTTGGNALKFYASVRLDIRRIGAVKEGDNVVGSETRVKVVKNKIAAPFKQAEFQILYGEGINFYGELVDLGVKEKLIEKAGAWYSYNGDKIGQGKANAITWLKENPAAAKEIEKKVRELLLNNQDAKPDFVVDGNDAEETEQDF.

Residue G67 to T74 participates in ATP binding.

It belongs to the RecA family.

Its subcellular location is the cytoplasm. Its function is as follows. Can catalyze the hydrolysis of ATP in the presence of single-stranded DNA, the ATP-dependent uptake of single-stranded DNA by duplex DNA, and the ATP-dependent hybridization of homologous single-stranded DNAs. It interacts with LexA causing its activation and leading to its autocatalytic cleavage. This Klebsiella pneumoniae subsp. pneumoniae (strain ATCC 700721 / MGH 78578) protein is Protein RecA.